The sequence spans 498 residues: Neoxanthin synthase, chloroplastic (498 aa).

A chloroplast-targeting transit peptide spans 1–42 (METLLKPFPSLLLSSPTPYRSIVQQNPSFLSPTTKKKSRKCL).

This sequence belongs to the lycopene cyclase family. Expressed exclusively in chromoplast-containing tissues of flowers and fruits. Expressed in preanthesis flowers.

The protein resides in the plastid. The protein localises to the chloroplast. The enzyme catalyses all-trans-violaxanthin = all-trans-neoxanthin. It catalyses the reaction a carotenoid psi-end group = a carotenoid beta-end derivative. It participates in carotenoid biosynthesis; neoxanthin biosynthesis. It functions in the pathway carotenoid biosynthesis; beta-carotene biosynthesis. In terms of biological role, involved in the synthesis of neoxanthin, the last product of carotenoid synthesis and a precursor of abscisic acid. Involved in the beta-carotene biosynthesis. In Solanum lycopersicum (Tomato), this protein is Neoxanthin synthase, chloroplastic.